The chain runs to 357 residues: tRNA/tmRNA (uracil-C(5))-methyltransferase (357 aa).

Residues Gln-180, Tyr-209, Asn-214, Glu-230, and Asp-290 each coordinate S-adenosyl-L-methionine. The active-site Nucleophile is Cys-315. The active-site Proton acceptor is Glu-349.

The protein belongs to the class I-like SAM-binding methyltransferase superfamily. RNA M5U methyltransferase family. TrmA subfamily.

The catalysed reaction is uridine(54) in tRNA + S-adenosyl-L-methionine = 5-methyluridine(54) in tRNA + S-adenosyl-L-homocysteine + H(+). It catalyses the reaction uridine(341) in tmRNA + S-adenosyl-L-methionine = 5-methyluridine(341) in tmRNA + S-adenosyl-L-homocysteine + H(+). Functionally, dual-specificity methyltransferase that catalyzes the formation of 5-methyluridine at position 54 (m5U54) in all tRNAs, and that of position 341 (m5U341) in tmRNA (transfer-mRNA). The polypeptide is tRNA/tmRNA (uracil-C(5))-methyltransferase (Campylobacter jejuni subsp. jejuni serotype O:23/36 (strain 81-176)).